The following is a 209-amino-acid chain: Thiamine-phosphate synthase (209 aa).

4-amino-2-methyl-5-(diphosphooxymethyl)pyrimidine is bound by residues Gln-36 to Lys-40 and Asn-68. The Mg(2+) site is built by Asp-69 and Asp-87. Residue Thr-106 coordinates 4-amino-2-methyl-5-(diphosphooxymethyl)pyrimidine. Position 133-135 (Ser-133–Thr-135) interacts with 2-[(2R,5Z)-2-carboxy-4-methylthiazol-5(2H)-ylidene]ethyl phosphate. Lys-136 contacts 4-amino-2-methyl-5-(diphosphooxymethyl)pyrimidine. Position 163 (Gly-163) interacts with 2-[(2R,5Z)-2-carboxy-4-methylthiazol-5(2H)-ylidene]ethyl phosphate.

The protein belongs to the thiamine-phosphate synthase family. Mg(2+) is required as a cofactor.

It catalyses the reaction 2-[(2R,5Z)-2-carboxy-4-methylthiazol-5(2H)-ylidene]ethyl phosphate + 4-amino-2-methyl-5-(diphosphooxymethyl)pyrimidine + 2 H(+) = thiamine phosphate + CO2 + diphosphate. The catalysed reaction is 2-(2-carboxy-4-methylthiazol-5-yl)ethyl phosphate + 4-amino-2-methyl-5-(diphosphooxymethyl)pyrimidine + 2 H(+) = thiamine phosphate + CO2 + diphosphate. The enzyme catalyses 4-methyl-5-(2-phosphooxyethyl)-thiazole + 4-amino-2-methyl-5-(diphosphooxymethyl)pyrimidine + H(+) = thiamine phosphate + diphosphate. Its pathway is cofactor biosynthesis; thiamine diphosphate biosynthesis; thiamine phosphate from 4-amino-2-methyl-5-diphosphomethylpyrimidine and 4-methyl-5-(2-phosphoethyl)-thiazole: step 1/1. Functionally, condenses 4-methyl-5-(beta-hydroxyethyl)thiazole monophosphate (THZ-P) and 2-methyl-4-amino-5-hydroxymethyl pyrimidine pyrophosphate (HMP-PP) to form thiamine monophosphate (TMP). This is Thiamine-phosphate synthase from Pseudomonas aeruginosa (strain LESB58).